A 406-amino-acid chain; its full sequence is Tryptophan synthase beta chain (406 aa).

The residue at position 99 (Lys-99) is an N6-(pyridoxal phosphate)lysine.

It belongs to the TrpB family. In terms of assembly, tetramer of two alpha and two beta chains. Pyridoxal 5'-phosphate is required as a cofactor.

The catalysed reaction is (1S,2R)-1-C-(indol-3-yl)glycerol 3-phosphate + L-serine = D-glyceraldehyde 3-phosphate + L-tryptophan + H2O. It functions in the pathway amino-acid biosynthesis; L-tryptophan biosynthesis; L-tryptophan from chorismate: step 5/5. Its function is as follows. The beta subunit is responsible for the synthesis of L-tryptophan from indole and L-serine. This chain is Tryptophan synthase beta chain, found in Brucella anthropi (strain ATCC 49188 / DSM 6882 / CCUG 24695 / JCM 21032 / LMG 3331 / NBRC 15819 / NCTC 12168 / Alc 37) (Ochrobactrum anthropi).